Reading from the N-terminus, the 487-residue chain is MQKNNENILRRGRLGSSTKKEVMNYMTSLSFDKEIFESDIFCDIAHTKMLMEQNIILEEDGIKIINELKKIYNNGMDCLNLDPSLDDIHMVIESELIKNLGEDVAGRMHTGRSRNDEVATDLRMALRDKILTILKLLINMQKNILNLAKEHKETLTIGYTHLQHAQPITFGHHLLSYASPMERDILRLIDTYKRVNICPLGSGAFATTGFNINRNATKELLGFDSVIENSMDGVASRDFILETMANLSILGTNLSKICEEMVLFSSCEFGTIDLANEYTSTSSIMPQKKNPDVAEIARAKLSTLNGNLVTVLTILKALPNTYNRDLQEISPHLWDSVYTTIDTLKIIDGMISTIKVNADRMKELTEKNYSTATELADTLVRECNIPFRTAHGIVGEVVRLSIENNKNMNEVIRDVLDKFNLKLDDSKIEKALNPMENVKMRKVIGGPAPEEVERAINSYYSRIENYEKEVNDKIEKIEIIKNNLLNL.

It belongs to the lyase 1 family. Argininosuccinate lyase subfamily.

Its subcellular location is the cytoplasm. The catalysed reaction is 2-(N(omega)-L-arginino)succinate = fumarate + L-arginine. Its pathway is amino-acid biosynthesis; L-arginine biosynthesis; L-arginine from L-ornithine and carbamoyl phosphate: step 3/3. The sequence is that of Argininosuccinate lyase from Methanococcus aeolicus (strain ATCC BAA-1280 / DSM 17508 / OCM 812 / Nankai-3).